A 195-amino-acid polypeptide reads, in one-letter code: Putative manganese efflux pump MntP (195 aa).

Helical transmembrane passes span 3–23 (LSAT…ASVG), 40–60 (GLIF…LGLL), 68–88 (WDHW…VLAG), 106–126 (VLIA…VGLA), 132–152 (ILHA…IGML), and 165–185 (AEII…YSHI).

The protein belongs to the MntP (TC 9.B.29) family.

The protein resides in the cell inner membrane. Probably functions as a manganese efflux pump. The protein is Putative manganese efflux pump MntP of Sodalis glossinidius (strain morsitans).